Reading from the N-terminus, the 281-residue chain is NAD-dependent protein deacetylase 1 (281 aa).

One can recognise a Deacetylase sirtuin-type domain in the interval 1–281 (MEEGAALEGV…FDQILDALDL (281 aa)). Residues 24–44 (GAGV…GSLN) and 102–105 (QNVD) contribute to the NAD(+) site. H120 functions as the Proton acceptor in the catalytic mechanism. Zn(2+) contacts are provided by C128, C131, C183, and C186. NAD(+) contacts are provided by residues 224-226 (GSS), 250-252 (NGG), and V268.

Belongs to the sirtuin family. Class II subfamily. The cofactor is Zn(2+).

The protein localises to the cytoplasm. The catalysed reaction is N(6)-acetyl-L-lysyl-[protein] + NAD(+) + H2O = 2''-O-acetyl-ADP-D-ribose + nicotinamide + L-lysyl-[protein]. NAD-dependent protein deacetylase which modulates the activities of several enzymes which are inactive in their acetylated form. This is NAD-dependent protein deacetylase 1 from Corynebacterium efficiens (strain DSM 44549 / YS-314 / AJ 12310 / JCM 11189 / NBRC 100395).